A 415-amino-acid polypeptide reads, in one-letter code: Gamma-glutamyl phosphate reductase (415 aa).

This sequence belongs to the gamma-glutamyl phosphate reductase family.

It is found in the cytoplasm. It catalyses the reaction L-glutamate 5-semialdehyde + phosphate + NADP(+) = L-glutamyl 5-phosphate + NADPH + H(+). It participates in amino-acid biosynthesis; L-proline biosynthesis; L-glutamate 5-semialdehyde from L-glutamate: step 2/2. Catalyzes the NADPH-dependent reduction of L-glutamate 5-phosphate into L-glutamate 5-semialdehyde and phosphate. The product spontaneously undergoes cyclization to form 1-pyrroline-5-carboxylate. This is Gamma-glutamyl phosphate reductase from Ligilactobacillus salivarius (strain UCC118) (Lactobacillus salivarius).